The chain runs to 941 residues: Pre-mRNA-processing factor 6 (941 aa).

The segment at 1–79 is disordered; sequence MNKKKKPFLG…DEDLNDTNYD (79 aa). Residues 39–65 show a composition bias toward basic and acidic residues; sequence DANDPVDDRHAPPGKRTVGDQMKKNQA. Over residues 66–78 the composition is skewed to acidic residues; that stretch reads ADDDDEDLNDTNY. The residue at position 143 (Ser-143) is a Phosphoserine. A phosphothreonine mark is found at Thr-180, Thr-266, and Thr-275. At Ser-279 the chain carries Phosphoserine. HAT repeat units follow at residues 384–416, 418–444, 445–476, 554–586, 588–620, 622–654, 689–721, 723–755, and 855–887; these read TDIR…LEEP, DARI…ARLE, TYEN…LEEA, NALE…FEKN, GTRE…SKWL, GDVP…LESE, GNIS…IEEQ, ELME…LEEK, and RKIT…FELQ.

Identified in the spliceosome B complex. Identified in the spliceosome C complex. Associates with the U5 snRNP particle. Component of the U4/U6-U5 tri-snRNP complex composed of the U4, U6 and U5 snRNAs and at least PRPF3, PRPF4, PRPF6, PRPF8, PRPF31, SNRNP200, TXNL4A, SNRNP40, DDX23, CD2BP2, PPIH, SNU13, EFTUD2, SART1 and USP39, LSm proteins LSm2-8 and Sm proteins. Interacts with ARAF1. Interacts with AR and NR3C1, but not ESR1, independently of the presence of hormones. Interacts with USH1G. Phosphorylated by PRP4K during spliceosome assembly.

The protein localises to the nucleus. The protein resides in the nucleoplasm. It is found in the nucleus speckle. Involved in pre-mRNA splicing as component of the U4/U6-U5 tri-snRNP complex, one of the building blocks of the spliceosome. Enhances dihydrotestosterone-induced transactivation activity of AR, as well as dexamethasone-induced transactivation activity of NR3C1, but does not affect estrogen-induced transactivation. In Mus musculus (Mouse), this protein is Pre-mRNA-processing factor 6 (Prpf6).